A 242-amino-acid chain; its full sequence is Biosynthetic peptidoglycan transglycosylase (242 aa).

A helical membrane pass occupies residues 15–35 (FLLLLMVVLAVFWGGGIALFS).

It belongs to the glycosyltransferase 51 family.

The protein localises to the cell inner membrane. It carries out the reaction [GlcNAc-(1-&gt;4)-Mur2Ac(oyl-L-Ala-gamma-D-Glu-L-Lys-D-Ala-D-Ala)](n)-di-trans,octa-cis-undecaprenyl diphosphate + beta-D-GlcNAc-(1-&gt;4)-Mur2Ac(oyl-L-Ala-gamma-D-Glu-L-Lys-D-Ala-D-Ala)-di-trans,octa-cis-undecaprenyl diphosphate = [GlcNAc-(1-&gt;4)-Mur2Ac(oyl-L-Ala-gamma-D-Glu-L-Lys-D-Ala-D-Ala)](n+1)-di-trans,octa-cis-undecaprenyl diphosphate + di-trans,octa-cis-undecaprenyl diphosphate + H(+). Its pathway is cell wall biogenesis; peptidoglycan biosynthesis. Peptidoglycan polymerase that catalyzes glycan chain elongation from lipid-linked precursors. In Shigella sonnei (strain Ss046), this protein is Biosynthetic peptidoglycan transglycosylase.